Here is a 285-residue protein sequence, read N- to C-terminus: HTH-type transcriptional regulator HexR (285 aa).

Residues 2 to 78 enclose the HTH rpiR-type domain; that stretch reads KNLLEQIQSR…IQLAQSLASG (77 aa). Positions 38–57 form a DNA-binding region, H-T-H motif; that stretch reads IAALAQAAAVSEPTVNRFCR. The SIS domain maps to 122 to 261; the sequence is AVDLLIQARQ…ATGVTLRRGV (140 aa).

Its function is as follows. Involved in regulation of glucose metabolism. Transcriptional repressor of the gap-1 gene and of the edd-glk-gltR-2 and zwf-pgl-eda operons. Acts by binding directly to an inverted pseudopalindromic sequence in the promoter region. The polypeptide is HTH-type transcriptional regulator HexR (Pseudomonas aeruginosa (strain ATCC 15692 / DSM 22644 / CIP 104116 / JCM 14847 / LMG 12228 / 1C / PRS 101 / PAO1)).